A 406-amino-acid chain; its full sequence is Glutamyl-tRNA reductase (406 aa).

Residues 51–54, Ser-101, 106–108, and Gln-112 contribute to the substrate site; these read TCNR and ESE. Cys-52 (nucleophile) is an active-site residue. 180–185 lines the NADP(+) pocket; the sequence is GAGSIG.

It belongs to the glutamyl-tRNA reductase family. In terms of assembly, homodimer.

The catalysed reaction is (S)-4-amino-5-oxopentanoate + tRNA(Glu) + NADP(+) = L-glutamyl-tRNA(Glu) + NADPH + H(+). Its pathway is porphyrin-containing compound metabolism; protoporphyrin-IX biosynthesis; 5-aminolevulinate from L-glutamyl-tRNA(Glu): step 1/2. Its function is as follows. Catalyzes the NADPH-dependent reduction of glutamyl-tRNA(Glu) to glutamate 1-semialdehyde (GSA). The polypeptide is Glutamyl-tRNA reductase (Caldivirga maquilingensis (strain ATCC 700844 / DSM 13496 / JCM 10307 / IC-167)).